The following is a 120-amino-acid chain: Alanine racemase (120 aa).

Residue Y24 is the Proton acceptor; specific for L-alanine of the active site.

The protein belongs to the alanine racemase family. Homodimer. It depends on pyridoxal 5'-phosphate as a cofactor.

It catalyses the reaction L-alanine = D-alanine. In terms of biological role, highly specific to D- and L-alanine and does not catalyze the racemization of other amino acids. This Penaeus monodon (Giant tiger prawn) protein is Alanine racemase.